Reading from the N-terminus, the 320-residue chain is Tabersonine synthase (320 aa).

Residues 78 to 80 carry the Involved in the stabilization of the negatively charged intermediate by the formation of the oxyanion hole motif; it reads HGA. Gly81 provides a ligand contact to (-)-tabersonine. The Proton acceptor role is filled by Ser170. The active site involves Asp266. (-)-tabersonine is bound at residue Tyr297. The active-site Proton donor/acceptor is the Tyr297.

This sequence belongs to the 'GDXG' lipolytic enzyme family. Interacts with dehydroprecondylocarpine acetate synthase (DPAS). Expressed in leaf epidermis.

The protein localises to the cytoplasm. It localises to the cytosol. Its subcellular location is the nucleus. It catalyses the reaction dehydrosecodine = (-)-tabersonine. It carries out the reaction dihydroprecondylocarpine acetate = (-)-tabersonine + acetate + H(+). The protein operates within alkaloid biosynthesis. Its function is as follows. Component of iboga and aspidosperma monoterpenoid indole alkaloids (MIAs, e.g. tabersonine and catharanthine) biosynthesis pathway from 19E-geissoschizine, psychoactive compounds likely to be used in the treatment of opioid dependence. Catalyzes the conversion of dehydrosecodine to tabersonine, a precursor of vindoline; this process starts with the conversion of dihydroprecondylocarpine acetate to dehydrosecodine. This is Tabersonine synthase from Catharanthus roseus (Madagascar periwinkle).